The chain runs to 130 residues: Small ribosomal subunit protein uS9 (130 aa).

Belongs to the universal ribosomal protein uS9 family.

This chain is Small ribosomal subunit protein uS9, found in Cupriavidus metallidurans (strain ATCC 43123 / DSM 2839 / NBRC 102507 / CH34) (Ralstonia metallidurans).